Consider the following 354-residue polypeptide: Putrescine/cadaverine-binding protein (354 aa).

Residues 1 to 20 form the signal peptide; sequence MMKKLLLVATLMAGAAQATA.

The protein belongs to the bacterial solute-binding protein 1 family.

The protein localises to the periplasm. In terms of biological role, binds putrescine and cadaverine. The polypeptide is Putrescine/cadaverine-binding protein (Pseudomonas aeruginosa (strain ATCC 15692 / DSM 22644 / CIP 104116 / JCM 14847 / LMG 12228 / 1C / PRS 101 / PAO1)).